Reading from the N-terminus, the 226-residue chain is Protein GrpE (226 aa).

2 disordered regions span residues M1–R24 and G205–A226. A compositionally biased stretch (polar residues) spans N217–A226.

The protein belongs to the GrpE family. In terms of assembly, homodimer.

Its subcellular location is the cytoplasm. Functionally, participates actively in the response to hyperosmotic and heat shock by preventing the aggregation of stress-denatured proteins, in association with DnaK and GrpE. It is the nucleotide exchange factor for DnaK and may function as a thermosensor. Unfolded proteins bind initially to DnaJ; upon interaction with the DnaJ-bound protein, DnaK hydrolyzes its bound ATP, resulting in the formation of a stable complex. GrpE releases ADP from DnaK; ATP binding to DnaK triggers the release of the substrate protein, thus completing the reaction cycle. Several rounds of ATP-dependent interactions between DnaJ, DnaK and GrpE are required for fully efficient folding. The chain is Protein GrpE from Brucella melitensis biotype 1 (strain ATCC 23456 / CCUG 17765 / NCTC 10094 / 16M).